A 429-amino-acid chain; its full sequence is Adenylosuccinate synthetase (429 aa).

GTP contacts are provided by residues 12 to 18 (GDEGKGK) and 40 to 42 (GHT). Aspartate 13 (proton acceptor) is an active-site residue. Aspartate 13 and glycine 40 together coordinate Mg(2+). IMP-binding positions include 13 to 16 (DEGK), 38 to 41 (NAGH), threonine 129, arginine 143, glutamine 223, threonine 238, and arginine 302. Histidine 41 acts as the Proton donor in catalysis. 298 to 304 (TVTGRKR) contacts substrate. Residues arginine 304, 330 to 332 (KLD), and 412 to 414 (STS) contribute to the GTP site.

Belongs to the adenylosuccinate synthetase family. Homodimer. Mg(2+) serves as cofactor.

It is found in the cytoplasm. The catalysed reaction is IMP + L-aspartate + GTP = N(6)-(1,2-dicarboxyethyl)-AMP + GDP + phosphate + 2 H(+). It functions in the pathway purine metabolism; AMP biosynthesis via de novo pathway; AMP from IMP: step 1/2. Plays an important role in the de novo pathway of purine nucleotide biosynthesis. Catalyzes the first committed step in the biosynthesis of AMP from IMP. This Sphingopyxis alaskensis (strain DSM 13593 / LMG 18877 / RB2256) (Sphingomonas alaskensis) protein is Adenylosuccinate synthetase.